The primary structure comprises 590 residues: G protein-coupled receptor kinase 5 (590 aa).

Residues methionine 1–threonine 185 form an N-terminal region. Residues glycine 20 to isoleucine 39 form an interaction with calmodulin region. In terms of domain architecture, RGS spans tyrosine 53 to leucine 171. Phosphoserine is present on serine 136. Residues phenylalanine 186 to phenylalanine 448 form the Protein kinase domain. ATP is bound by residues leucine 192–valine 200 and lysine 215. The active-site Proton acceptor is the aspartate 311. The Nuclear localization signal signature appears at arginine 388–glutamate 395. The AGC-kinase C-terminal domain maps to arginine 449–glutamate 514. A Phosphoserine; by autocatalysis modification is found at serine 484. Threonine 485 is modified (phosphothreonine; by autocatalysis). The segment at proline 546–serine 565 is sufficient for membrane localization. Positions arginine 557–serine 590 are disordered. Residues serine 561–serine 590 show a composition bias toward low complexity. Serine 579 bears the Phosphoserine mark.

Belongs to the protein kinase superfamily. AGC Ser/Thr protein kinase family. GPRK subfamily. Interacts with ST13 (via the C-terminus 303-319 AA). Interacts with TP53/p53. Interacts with HTR4 (via C-terminus 330-346 AA); this interaction is promoted by 5-HT (serotonin). Interacts with HDAC5. Interacts with GIT1. In terms of processing, autophosphorylated. Autophosphorylation may play a critical role in the regulation of GRK5 kinase activity.

The protein resides in the cytoplasm. It localises to the nucleus. The protein localises to the cell membrane. It carries out the reaction [G-protein-coupled receptor] + ATP = [G-protein-coupled receptor]-phosphate + ADP + H(+). Its activity is regulated as follows. Inhibited by calmodulin with an IC(50) of 50 nM. Calmodulin inhibits GRK5 association with receptor and phospholipid. Functionally, serine/threonine kinase that phosphorylates preferentially the activated forms of a variety of G-protein-coupled receptors (GPCRs). Such receptor phosphorylation initiates beta-arrestin-mediated receptor desensitization, internalization, and signaling events leading to their down-regulation. Phosphorylates a variety of GPCRs, including adrenergic receptors, muscarinic acetylcholine receptors (more specifically Gi-coupled M2/M4 subtypes), dopamine receptors and opioid receptors. In addition to GPCRs, also phosphorylates various substrates: Hsc70-interacting protein/ST13, TP53/p53, HDAC5, and arrestin-1/ARRB1. Phosphorylation of ARRB1 by GRK5 inhibits G-protein independent MAPK1/MAPK3 signaling downstream of 5HT4-receptors. Phosphorylation of HDAC5, a repressor of myocyte enhancer factor 2 (MEF2) leading to nuclear export of HDAC5 and allowing MEF2-mediated transcription. Phosphorylation of TP53/p53, a crucial tumor suppressor, inhibits TP53/p53-mediated apoptosis. Phosphorylation of ST13 regulates internalization of the chemokine receptor. Phosphorylates rhodopsin (RHO) (in vitro) and a non G-protein-coupled receptor, LRP6 during Wnt signaling (in vitro). The sequence is that of G protein-coupled receptor kinase 5 (Grk5) from Mus musculus (Mouse).